The chain runs to 137 residues: uncharacterized protein (137 aa).

In terms of domain architecture, HTH merR-type spans 4 to 73; the sequence is MLTVSEVARK…LEEIADILHL (70 aa). Residues 8-27 constitute a DNA-binding region (H-T-H motif); the sequence is SEVARKLGLNPQTLYFYERI.

This is an uncharacterized protein from Synechocystis sp. (strain ATCC 27184 / PCC 6803 / Kazusa).